The following is a 291-amino-acid chain: MESHEGIDVVLVTGLSGAGRGTAAKVLEDLGWYVADNLPPELIARMVDLGLAAGSRITQLAVVMDVRSKGFTGDLDWVRNELATRNIAPRVLFMEASDDILVRRYEQNRRSHPLQGTQTLAEGIAAERAMLAPVRAAADLVIDTSTLPVPALRESIERAFGGETVAYTNVTVESFGYKYGLPMDADTVMDVRFLPNPHWVDELRPHSGQHPDVRDYVLGQPGALEFLDTYHRLLDVVIDGYRREGKRYMTVAIGCTGGKHRSVAIAEALAERLEGGDGLTVRVLHRDLGRE.

ATP is bound at residue 14-21; that stretch reads GLSGAGRG. 65 to 68 contributes to the GTP binding site; it reads DVRS.

The protein belongs to the RapZ-like family.

Its function is as follows. Displays ATPase and GTPase activities. In Mycolicibacterium smegmatis (strain ATCC 700084 / mc(2)155) (Mycobacterium smegmatis), this protein is Nucleotide-binding protein MSMEG_3079/MSMEI_3001.